A 166-amino-acid polypeptide reads, in one-letter code: MRLLVAEAASPLSSAATPTCNSHTCRWKPYSNSTDFTANASVLLILVISALICALSLYAAIRCFLRPTLETEDDHKPDPEAAASSTPTTPTLVYSSDLELAGAEAECAICLSEFEQGESIQVLEKCQHGFHVKCIHKWLSTRSSCPTCRTSIFSQHSETPSSHINA.

Positions 1–16 are cleaved as a signal peptide; it reads MRLLVAEAASPLSSAA. The chain crosses the membrane as a helical span at residues 41 to 61; sequence SVLLILVISALICALSLYAAI. Residues 71-90 form a disordered region; it reads TEDDHKPDPEAAASSTPTTP. Low complexity predominate over residues 81 to 90; it reads AAASSTPTTP. An RING-type; atypical zinc finger spans residues 107-149; that stretch reads CAICLSEFEQGESIQVLEKCQHGFHVKCIHKWLSTRSSCPTCR.

The protein belongs to the RING-type zinc finger family. ATL subfamily.

It localises to the membrane. It carries out the reaction S-ubiquitinyl-[E2 ubiquitin-conjugating enzyme]-L-cysteine + [acceptor protein]-L-lysine = [E2 ubiquitin-conjugating enzyme]-L-cysteine + N(6)-ubiquitinyl-[acceptor protein]-L-lysine.. The protein operates within protein modification; protein ubiquitination. This chain is RING-H2 finger protein ATL79 (ATL79), found in Arabidopsis thaliana (Mouse-ear cress).